The sequence spans 546 residues: ATP-dependent RNA helicase DBP2 (546 aa).

A disordered region spans residues 1-56; that stretch reads MTYGGRDQQYNKTNYKSRGGDFRGGRNSDRNSYNDRPQGGNYRGGFGGRSNYNQPQ. Omega-N-methylarginine is present on residues Arg-18 and Arg-43. The segment covering 18-33 has biased composition (basic and acidic residues); it reads RGGDFRGGRNSDRNSY. Residues Ser-88 and Ser-90 each carry the phosphoserine modification. The Q motif signature appears at 113–141; sequence TTFDEAGFPDYVLNEVKAEGFDKPTGIQC. One can recognise a Helicase ATP-binding domain in the interval 144–319; the sequence is WPMALSGRDM…ADYLNDPIQV (176 aa). 157-164 is an ATP binding site; sequence AATGSGKT. The DEAD box motif lies at 267–270; the sequence is DEAD. A Helicase C-terminal domain is found at 347-494; the sequence is RLNKYLETAS…NIPPELLKYD (148 aa). Residue Lys-474 forms a Glycyl lysine isopeptide (Lys-Gly) (interchain with G-Cter in ubiquitin) linkage. A disordered region spans residues 493–546; that stretch reads YDRRSYGGGHPRYGGGRGGRGGYGRRGGYGGGRGGYGGNRQRDGGWGNRGRSNY. Residues 498–540 are compositionally biased toward gly residues; sequence YGGGHPRYGGGRGGRGGYGRRGGYGGGRGGYGGNRQRDGGWGN. The segment at 505–530 is RNA-binding RGG-box; it reads YGGGRGGRGGYGRRGGYGGGRGGYGG. Dimethylated arginine; alternate occurs at positions 509, 512, 518, and 525. An omega-N-methylarginine; alternate mark is found at Arg-509, Arg-512, Arg-518, and Arg-525.

This sequence belongs to the DEAD box helicase family. DDX5/DBP2 subfamily. In terms of assembly, interacts with UPF1. Associates with polysomes.

The protein resides in the cytoplasm. It is found in the nucleus. The enzyme catalyses ATP + H2O = ADP + phosphate + H(+). ATP-dependent RNA helicase involved nonsense-mediated mRNA decay and ribosome biogenesis through rRNA processing. Associates directly with chromatin, correlating with transcriptional activity. Required for assembly of mRNA-binding proteins YRA1, NAB2, and MEX67 onto poly(A)+ RNA. In Saccharomyces cerevisiae (strain ATCC 204508 / S288c) (Baker's yeast), this protein is ATP-dependent RNA helicase DBP2.